The sequence spans 217 residues: Octanoyltransferase (217 aa).

Residues 35–214 enclose the BPL/LPL catalytic domain; sequence DEAGERIWLL…TLPAFLDKLR (180 aa). Substrate contacts are provided by residues 73–80, 145–147, and 158–160; these read RGGRYTYH, AIG, and GFS. Cysteine 176 (acyl-thioester intermediate) is an active-site residue.

It belongs to the LipB family.

Its subcellular location is the cytoplasm. The enzyme catalyses octanoyl-[ACP] + L-lysyl-[protein] = N(6)-octanoyl-L-lysyl-[protein] + holo-[ACP] + H(+). It participates in protein modification; protein lipoylation via endogenous pathway; protein N(6)-(lipoyl)lysine from octanoyl-[acyl-carrier-protein]: step 1/2. In terms of biological role, catalyzes the transfer of endogenously produced octanoic acid from octanoyl-acyl-carrier-protein onto the lipoyl domains of lipoate-dependent enzymes. Lipoyl-ACP can also act as a substrate although octanoyl-ACP is likely to be the physiological substrate. This chain is Octanoyltransferase, found in Sphingopyxis alaskensis (strain DSM 13593 / LMG 18877 / RB2256) (Sphingomonas alaskensis).